Reading from the N-terminus, the 415-residue chain is Gamma-glutamyl phosphate reductase (415 aa).

It belongs to the gamma-glutamyl phosphate reductase family.

The protein localises to the cytoplasm. The catalysed reaction is L-glutamate 5-semialdehyde + phosphate + NADP(+) = L-glutamyl 5-phosphate + NADPH + H(+). It participates in amino-acid biosynthesis; L-proline biosynthesis; L-glutamate 5-semialdehyde from L-glutamate: step 2/2. Its function is as follows. Catalyzes the NADPH-dependent reduction of L-glutamate 5-phosphate into L-glutamate 5-semialdehyde and phosphate. The product spontaneously undergoes cyclization to form 1-pyrroline-5-carboxylate. This is Gamma-glutamyl phosphate reductase from Listeria monocytogenes serovar 1/2a (strain ATCC BAA-679 / EGD-e).